Reading from the N-terminus, the 79-residue chain is Cell division protein ZapB (79 aa).

Residues 3–79 (LEVFEKLEAK…QALLGRMEEV (77 aa)) adopt a coiled-coil conformation.

It belongs to the ZapB family. As to quaternary structure, homodimer. The ends of the coiled-coil dimer bind to each other, forming polymers. Interacts with FtsZ.

The protein localises to the cytoplasm. In terms of biological role, non-essential, abundant cell division factor that is required for proper Z-ring formation. It is recruited early to the divisome by direct interaction with FtsZ, stimulating Z-ring assembly and thereby promoting cell division earlier in the cell cycle. Its recruitment to the Z-ring requires functional FtsA or ZipA. In Salmonella typhi, this protein is Cell division protein ZapB.